Consider the following 1120-residue polypeptide: Transcription-repair-coupling factor (1120 aa).

Residues 591–756 (DLTNGMLMDR…MTGLKELSII (166 aa)) enclose the Helicase ATP-binding domain. 604–611 (GDVGFGKT) is an ATP binding site. A DEEQ box motif is present at residues 709-712 (DEEQ). In terms of domain architecture, Helicase C-terminal spans 777–933 (IIRDALLREH…TIASHDADLR (157 aa)).

This sequence in the N-terminal section; belongs to the UvrB family. The protein in the C-terminal section; belongs to the helicase family. RecG subfamily.

The protein localises to the cytoplasm. Couples transcription and DNA repair by recognizing RNA polymerase (RNAP) stalled at DNA lesions. Mediates ATP-dependent release of RNAP and its truncated transcript from the DNA, and recruitment of nucleotide excision repair machinery to the damaged site. The polypeptide is Transcription-repair-coupling factor (Rickettsia prowazekii (strain Madrid E)).